Consider the following 307-residue polypeptide: Aspartate carbamoyltransferase catalytic subunit (307 aa).

Carbamoyl phosphate-binding residues include arginine 56 and threonine 57. Lysine 84 serves as a coordination point for L-aspartate. Residues arginine 106, histidine 136, and glutamine 139 each contribute to the carbamoyl phosphate site. Positions 169 and 221 each coordinate L-aspartate. Carbamoyl phosphate contacts are provided by alanine 262 and proline 263.

This sequence belongs to the aspartate/ornithine carbamoyltransferase superfamily. ATCase family. Heterododecamer (2C3:3R2) of six catalytic PyrB chains organized as two trimers (C3), and six regulatory PyrI chains organized as three dimers (R2).

The catalysed reaction is carbamoyl phosphate + L-aspartate = N-carbamoyl-L-aspartate + phosphate + H(+). It participates in pyrimidine metabolism; UMP biosynthesis via de novo pathway; (S)-dihydroorotate from bicarbonate: step 2/3. Catalyzes the condensation of carbamoyl phosphate and aspartate to form carbamoyl aspartate and inorganic phosphate, the committed step in the de novo pyrimidine nucleotide biosynthesis pathway. This chain is Aspartate carbamoyltransferase catalytic subunit, found in Streptococcus pneumoniae (strain 70585).